The following is a 468-amino-acid chain: 6-phospho-beta-galactosidase (468 aa).

Residues glutamine 19, histidine 116, asparagine 159, glutamate 160, and asparagine 297 each contribute to the D-galactose 6-phosphate site. Glutamate 160 (proton donor) is an active-site residue. Glutamate 375 (nucleophile) is an active-site residue. Serine 428, tryptophan 429, lysine 435, and tyrosine 437 together coordinate D-galactose 6-phosphate.

Belongs to the glycosyl hydrolase 1 family.

The catalysed reaction is a 6-phospho-beta-D-galactoside + H2O = D-galactose 6-phosphate + an alcohol. It functions in the pathway carbohydrate metabolism; lactose degradation; D-galactose 6-phosphate and beta-D-glucose from lactose 6-phosphate: step 1/1. The protein is 6-phospho-beta-galactosidase of Lactococcus lactis subsp. lactis (Streptococcus lactis).